The primary structure comprises 290 residues: 4-hydroxy-3-methylbut-2-enyl diphosphate reductase (290 aa).

Cys-12 is a [4Fe-4S] cluster binding site. His-50 and His-83 together coordinate (2E)-4-hydroxy-3-methylbut-2-enyl diphosphate. Residues His-50 and His-83 each contribute to the dimethylallyl diphosphate site. The isopentenyl diphosphate site is built by His-50 and His-83. Residue Cys-105 coordinates [4Fe-4S] cluster. A (2E)-4-hydroxy-3-methylbut-2-enyl diphosphate-binding site is contributed by His-133. Residue His-133 participates in dimethylallyl diphosphate binding. Residue His-133 coordinates isopentenyl diphosphate. Glu-135 acts as the Proton donor in catalysis. Residue Thr-173 participates in (2E)-4-hydroxy-3-methylbut-2-enyl diphosphate binding. Cys-202 provides a ligand contact to [4Fe-4S] cluster. Positions 230, 232, and 274 each coordinate (2E)-4-hydroxy-3-methylbut-2-enyl diphosphate. Ser-230, Asn-232, and Ser-274 together coordinate dimethylallyl diphosphate. Isopentenyl diphosphate is bound by residues Ser-230, Asn-232, and Ser-274.

It belongs to the IspH family. The cofactor is [4Fe-4S] cluster.

It catalyses the reaction isopentenyl diphosphate + 2 oxidized [2Fe-2S]-[ferredoxin] + H2O = (2E)-4-hydroxy-3-methylbut-2-enyl diphosphate + 2 reduced [2Fe-2S]-[ferredoxin] + 2 H(+). It carries out the reaction dimethylallyl diphosphate + 2 oxidized [2Fe-2S]-[ferredoxin] + H2O = (2E)-4-hydroxy-3-methylbut-2-enyl diphosphate + 2 reduced [2Fe-2S]-[ferredoxin] + 2 H(+). It functions in the pathway isoprenoid biosynthesis; dimethylallyl diphosphate biosynthesis; dimethylallyl diphosphate from (2E)-4-hydroxy-3-methylbutenyl diphosphate: step 1/1. The protein operates within isoprenoid biosynthesis; isopentenyl diphosphate biosynthesis via DXP pathway; isopentenyl diphosphate from 1-deoxy-D-xylulose 5-phosphate: step 6/6. Catalyzes the conversion of 1-hydroxy-2-methyl-2-(E)-butenyl 4-diphosphate (HMBPP) into a mixture of isopentenyl diphosphate (IPP) and dimethylallyl diphosphate (DMAPP). Acts in the terminal step of the DOXP/MEP pathway for isoprenoid precursor biosynthesis. The protein is 4-hydroxy-3-methylbut-2-enyl diphosphate reductase of Nitratidesulfovibrio vulgaris (strain ATCC 29579 / DSM 644 / CCUG 34227 / NCIMB 8303 / VKM B-1760 / Hildenborough) (Desulfovibrio vulgaris).